Reading from the N-terminus, the 336-residue chain is MSTQFSLSSNISYDDPISFECDTSYDSGLELLKYIIQVTLLSINFILNFLIIRVTMFSKNNDFRENSFFIIYAADLIMGMYMSLSEILVGRLFIYVTLLCPILAPYFFTPSIFLKIFFTLSHYSQGFKTVSQVFLSFNRMTCVVFPVGYSAIWKRILTPIIIVLFVLPIGIIWNVLISRVYANPSFGGFSVNYIKLVSWASLSKLHLTYFIVSLILIIVISGVTLYALLILKHRIKSAEQTLTIATMVLSLEFSFLSVIQIYFAFFSSSTSEWRPFLLRVMYFTYDLLNFSTTIIFISCNPKLRKMLLKRMQSSVTVGRSTSNSTIPVRIIPALIH.

The next 8 membrane-spanning stretches (helical) occupy residues 32 to 52 (LKYIIQVTLLSINFILNFLII), 68 to 88 (FFIIYAADLIMGMYMSLSEIL), 93 to 113 (FIYVTLLCPILAPYFFTPSIF), 133 to 153 (VFLSFNRMTCVVFPVGYSAIW), 156 to 176 (ILTPIIIVLFVLPIGIIWNVL), 210 to 230 (FIVSLILIIVISGVTLYALLI), 246 to 266 (TMVLSLEFSFLSVIQIYFAFF), and 277 to 297 (LLRVMYFTYDLLNFSTTIIFI).

This sequence belongs to the nematode receptor-like protein srg family.

It localises to the membrane. The protein is Serpentine receptor class gamma-13 (srg-13) of Caenorhabditis elegans.